The following is a 259-amino-acid chain: Ubiquinone/menaquinone biosynthesis C-methyltransferase UbiE (259 aa).

S-adenosyl-L-methionine-binding positions include Thr-82, Asp-103, Asn-131–Ala-132, and Ser-148.

Belongs to the class I-like SAM-binding methyltransferase superfamily. MenG/UbiE family.

It catalyses the reaction a 2-demethylmenaquinol + S-adenosyl-L-methionine = a menaquinol + S-adenosyl-L-homocysteine + H(+). It carries out the reaction a 2-methoxy-6-(all-trans-polyprenyl)benzene-1,4-diol + S-adenosyl-L-methionine = a 5-methoxy-2-methyl-3-(all-trans-polyprenyl)benzene-1,4-diol + S-adenosyl-L-homocysteine + H(+). It participates in quinol/quinone metabolism; menaquinone biosynthesis; menaquinol from 1,4-dihydroxy-2-naphthoate: step 2/2. The protein operates within cofactor biosynthesis; ubiquinone biosynthesis. Methyltransferase required for the conversion of demethylmenaquinol (DMKH2) to menaquinol (MKH2) and the conversion of 2-polyprenyl-6-methoxy-1,4-benzoquinol (DDMQH2) to 2-polyprenyl-3-methyl-6-methoxy-1,4-benzoquinol (DMQH2). The chain is Ubiquinone/menaquinone biosynthesis C-methyltransferase UbiE from Vibrio campbellii (strain ATCC BAA-1116).